Reading from the N-terminus, the 362-residue chain is Cytoskeleton protein RodZ (362 aa).

The Cytoplasmic portion of the chain corresponds to 1-111 (MNTEASQDQT…LGKKHKKRDG (111 aa)). The HTH cro/C1-type domain occupies 19-79 (LRQARESLGL…KLVHLPEDEL (61 aa)). A DNA-binding region (H-T-H motif) is located at residues 30 to 49 (QQTVAERLCLKVSTIRDIEE). Residues 112–132 (WLMSFTWLIVLVVLGLTGAWW) traverse the membrane as a helical; Signal-anchor for type II membrane protein segment. The Periplasmic segment spans residues 133-362 (WQNHQAQQAE…RVARLTVGVE (230 aa)). Residues 151–277 (SAQLSQNGGQ…LPTADAGVSG (127 aa)) form a disordered region. Low complexity predominate over residues 193–221 (STSAVTNSATTSSATTSSVPTTSSVPKTT). A compositionally biased stretch (polar residues) spans 223–242 (VPKTNSTEPVDTANTNTTMH). Residues 246–259 (AASAAVSPSQVPQP) show a composition bias toward low complexity.

It belongs to the RodZ family.

It localises to the cell inner membrane. In terms of biological role, cytoskeletal protein that is involved in cell-shape control through regulation of the length of the long axis. The chain is Cytoskeleton protein RodZ from Yersinia pseudotuberculosis serotype IB (strain PB1/+).